A 343-amino-acid chain; its full sequence is Small ribosomal subunit biogenesis GTPase RsgA (343 aa).

Residues 116-275 (HGQLKPVAAN…LIDSPGIREF (160 aa)) form the CP-type G domain. GTP is bound by residues 163–166 (NKAD) and 217–225 (GQSGVGKSS). Cysteine 299, cysteine 304, histidine 306, and cysteine 312 together coordinate Zn(2+).

It belongs to the TRAFAC class YlqF/YawG GTPase family. RsgA subfamily. In terms of assembly, monomer. Associates with 30S ribosomal subunit, binds 16S rRNA. The cofactor is Zn(2+).

It is found in the cytoplasm. In terms of biological role, one of several proteins that assist in the late maturation steps of the functional core of the 30S ribosomal subunit. Helps release RbfA from mature subunits. May play a role in the assembly of ribosomal proteins into the subunit. Circularly permuted GTPase that catalyzes slow GTP hydrolysis, GTPase activity is stimulated by the 30S ribosomal subunit. The polypeptide is Small ribosomal subunit biogenesis GTPase RsgA (Pseudomonas putida (strain ATCC 700007 / DSM 6899 / JCM 31910 / BCRC 17059 / LMG 24140 / F1)).